We begin with the raw amino-acid sequence, 47 residues long: PhoP/PhoQ regulator MgrB (47 aa).

The chain crosses the membrane as a helical span at residues 6–26 (WVVLVVVVLACLLLWAQVFNM).

The protein belongs to the MgrB family. May form homooligomers. Probably interacts with the periplasmic domain of PhoQ.

The protein localises to the cell inner membrane. PhoP-regulated transcription is redox-sensitive, being activated when the periplasm becomes more reducing. MgrB acts between DsbA/DsbB and PhoP/PhoQ in this pathway. Represses PhoP/PhoQ signaling, possibly by binding to the periplasmic domain of PhoQ, altering its activity and that of downstream effector PhoP. The sequence is that of PhoP/PhoQ regulator MgrB from Escherichia coli O157:H7.